The sequence spans 783 residues: Tricorn protease-interacting factor F2 (783 aa).

Substrate is bound by residues Glu-107 and 236 to 240; that span reads GAMEN. Residue His-271 participates in Zn(2+) binding. Glu-272 serves as the catalytic Proton acceptor. His-275 and Glu-294 together coordinate Zn(2+).

Belongs to the peptidase M1 family. Monomer. Part of the Tricorn proteolytic complex. Zn(2+) is required as a cofactor.

The protein resides in the cytoplasm. Proteases F1, F2 and F3 degrade oligopeptides produced by Tricorn (themselves probably produced by the proteasome), yielding free amino acids. The chain is Tricorn protease-interacting factor F2 (trf2) from Thermoplasma volcanium (strain ATCC 51530 / DSM 4299 / JCM 9571 / NBRC 15438 / GSS1).